We begin with the raw amino-acid sequence, 132 residues long: Small ribosomal subunit protein uS11 (132 aa).

Belongs to the universal ribosomal protein uS11 family. In terms of assembly, part of the 30S ribosomal subunit. Interacts with proteins S7 and S18. Binds to IF-3.

Functionally, located on the platform of the 30S subunit, it bridges several disparate RNA helices of the 16S rRNA. Forms part of the Shine-Dalgarno cleft in the 70S ribosome. The protein is Small ribosomal subunit protein uS11 of Chlamydia trachomatis serovar L2 (strain ATCC VR-902B / DSM 19102 / 434/Bu).